The sequence spans 562 residues: MSESPLTIVIVDEDPVFRLGLITVLGRETGVQVLGEGETLDDLRQQLETLAPSILLIDPQFPRRSQSAWPLLRQLSSAYPQVKICLLTASLEYDQLLAAKTQGIAAYFPKGTAIADLVTGLKQVHFGQTCWPSLQTVNAPPLSLWEKLIWPLFRDGLGQIEQSLQQVQKSLQVPSLSDFDRLFWRGRERELKFAQWLVRNLLPQRLKTWHKATNILTATTTVLPPSPPSPRRSGVRTITLRPPSNLTALGQILQQMPLQVENLTAIPLELDILQPLKRQELLSLGQQQLETTINELKALRITPAQLPENCLSIVAEMWRSLSLTFFGKYCQPKSEFSLEQIQSLLEVYQPIICREKLVKIPFVVPLFHHLLFGEPLVVNQKAYPLGSTEAQQYSDLYAQNLVIQLANSTMVFILNYFADHEAIKLALYEYSMLSSRQVARFRNDLAWYYQFSRYWLNPKQIFESQHTLLYLTPAGIVTTQVYAPRQQELTQLRAVPWFVTIVLECRDALSPRVRSVIEFVGNGLVFLLTQVVGRAIGLVGKGIIQGIGNTWQESRSQQKRSN.

Residues 7 to 125 (TIVIVDEDPV…DLVTGLKQVH (119 aa)) enclose the Response regulatory domain.

This sequence belongs to the ycf55 family.

The chain is Ycf55-like protein from Synechocystis sp. (strain ATCC 27184 / PCC 6803 / Kazusa).